A 65-amino-acid polypeptide reads, in one-letter code: Large ribosomal subunit protein bL32 (65 aa).

It belongs to the bacterial ribosomal protein bL32 family.

The chain is Large ribosomal subunit protein bL32 from Phytoplasma australiense.